A 221-amino-acid chain; its full sequence is 7-cyano-7-deazaguanine synthase (221 aa).

Residue Leu-7–Leu-17 coordinates ATP. Positions 192, 200, 203, and 206 each coordinate Zn(2+).

It belongs to the QueC family. As to quaternary structure, homodimer. Requires Zn(2+) as cofactor.

The enzyme catalyses 7-carboxy-7-deazaguanine + NH4(+) + ATP = 7-cyano-7-deazaguanine + ADP + phosphate + H2O + H(+). Its pathway is purine metabolism; 7-cyano-7-deazaguanine biosynthesis. In terms of biological role, catalyzes the ATP-dependent conversion of 7-carboxy-7-deazaguanine (CDG) to 7-cyano-7-deazaguanine (preQ(0)). The chain is 7-cyano-7-deazaguanine synthase from Pelotomaculum thermopropionicum (strain DSM 13744 / JCM 10971 / SI).